A 1205-amino-acid polypeptide reads, in one-letter code: cGMP-specific 3',5'-cyclic phosphodiesterase (1205 aa).

Residues 1–153 (MTDVSSPAGG…TKASTTASQQ (153 aa)) form a disordered region. Low complexity predominate over residues 18 to 32 (TTSSSPAATTSASSS). The segment covering 33–48 (KPLTNGANKTTISTTA) has biased composition (polar residues). Over residues 62-71 (GAIPASSSSG) the composition is skewed to low complexity. Polar residues predominate over residues 83–94 (SNNNRPAATNRS). Positions 118-140 (SSSSPSQSPSQTQASIQTQTSQQ) are enriched in low complexity. GAF domains lie at 259 to 411 (DIDV…GIGI) and 443 to 624 (NLEC…GLGI). Positions 654 to 1052 (SQDQTEKLTQ…RNWQDLAEKV (399 aa)) constitute a PDEase domain. Catalysis depends on His-730, which acts as the Proton donor. A divalent metal cation-binding residues include His-734, His-770, Asp-771, and Asp-956. 2 disordered regions span residues 1093-1122 (QQSQHGSEDSHTPEHQRSGSRLSMKKTGAL) and 1152-1205 (SHVS…CALL). Composition is skewed to basic and acidic residues over residues 1098 to 1109 (GSEDSHTPEHQR) and 1152 to 1162 (SHVSEDMDDKS). Positions 1171–1191 (ASGSMGRMSASSSTSSAGGQM) are enriched in low complexity. The span at 1195 to 1205 (SKKRSKLCALL) shows a compositional bias: basic residues. The residue at position 1202 (Cys-1202) is a Cysteine methyl ester. The S-farnesyl cysteine moiety is linked to residue Cys-1202. Residues 1203–1205 (ALL) constitute a propeptide, removed in mature form.

It belongs to the cyclic nucleotide phosphodiesterase family. In terms of assembly, interacts with PrBP. The cofactor is a divalent metal cation.

The protein localises to the cell membrane. The catalysed reaction is 3',5'-cyclic GMP + H2O = GMP + H(+). In terms of biological role, has a role regulating cGMP transport in Malpighian tubule principal cells. This chain is cGMP-specific 3',5'-cyclic phosphodiesterase, found in Drosophila sechellia (Fruit fly).